Here is a 118-residue protein sequence, read N- to C-terminus: Holo-[acyl-carrier-protein] synthase (118 aa).

Mg(2+) contacts are provided by Asp8 and Glu57.

This sequence belongs to the P-Pant transferase superfamily. AcpS family. Requires Mg(2+) as cofactor.

Its subcellular location is the cytoplasm. The enzyme catalyses apo-[ACP] + CoA = holo-[ACP] + adenosine 3',5'-bisphosphate + H(+). In terms of biological role, transfers the 4'-phosphopantetheine moiety from coenzyme A to a Ser of acyl-carrier-protein. This is Holo-[acyl-carrier-protein] synthase from Pediococcus pentosaceus (strain ATCC 25745 / CCUG 21536 / LMG 10740 / 183-1w).